The chain runs to 265 residues: Apolipoprotein A-I (265 aa).

The signal sequence occupies residues 1–18; it reads MKAVVLAVAALFLAGGEA. A run of 2 repeats spans residues 68–89 and 90–111. Positions 68-265 are 10 X approximate tandem repeats; it reads LKLTENLDTL…EEASKKLSSQ (198 aa). Position 110 is a methionine sulfoxide (M110). One copy of the 3; half-length repeat lies at 112–122; sequence KDLADMKQKVQ. Repeat copies occupy residues 123 to 144, 145 to 166, and 167 to 188. One copy of the 7; truncated repeat lies at 189-208; it reads PYSEQMRERLAERLAALRDS. Methionine sulfoxide is present on M194. Repeat 8 spans residues 209-230; the sequence is PSLAEYQAKAHEHLKTLHEKAQ. A 9; half-length repeat occupies 231-241; it reads PALSDLGQGVL. Repeat 10 spans residues 242–265; that stretch reads PVLESLKATLVGAIEEASKKLSSQ.

This sequence belongs to the apolipoprotein A1/A4/E family. In terms of assembly, homodimer. Interacts with APOA1BP and CLU. Component of a sperm activating protein complex (SPAP), consisting of APOA1, an immunoglobulin heavy chain, an immunoglobulin light chain and albumin. Interacts with NDRG1. Interacts with SCGB3A2. Interacts with NAXE and YJEFN3. In terms of processing, glycosylated. Post-translationally, palmitoylated. Phosphorylation sites are present in the extracellular medium.

It localises to the secreted. Participates in the reverse transport of cholesterol from tissues to the liver for excretion by promoting cholesterol efflux from tissues and by acting as a cofactor for the lecithin cholesterol acyltransferase (LCAT). As part of the SPAP complex, activates spermatozoa motility. The protein is Apolipoprotein A-I (Apoa1) of Dipodomys ordii (Ord's kangaroo rat).